A 152-amino-acid chain; its full sequence is TOMM20-like protein 1 (152 aa).

Topologically, residues 1-6 (MPSVRL) are mitochondrial intermembrane. Residues 7–27 (GVGLLAGLAAGGAVVLLSYCV) form a helical membrane-spanning segment. Residues 28–152 (YLDWRRHRDP…STEHLKDDPD (125 aa)) are Cytoplasmic-facing.

This sequence belongs to the Tom20 family.

The protein localises to the mitochondrion outer membrane. The sequence is that of TOMM20-like protein 1 (Tomm20l) from Mus musculus (Mouse).